We begin with the raw amino-acid sequence, 363 residues long: tRNA/tmRNA (uracil-C(5))-methyltransferase (363 aa).

Gln-187, Tyr-215, Asn-220, Glu-236, and Asp-296 together coordinate S-adenosyl-L-methionine. Cys-321 (nucleophile) is an active-site residue. The active-site Proton acceptor is Glu-355.

This sequence belongs to the class I-like SAM-binding methyltransferase superfamily. RNA M5U methyltransferase family. TrmA subfamily.

The enzyme catalyses uridine(54) in tRNA + S-adenosyl-L-methionine = 5-methyluridine(54) in tRNA + S-adenosyl-L-homocysteine + H(+). It catalyses the reaction uridine(341) in tmRNA + S-adenosyl-L-methionine = 5-methyluridine(341) in tmRNA + S-adenosyl-L-homocysteine + H(+). In terms of biological role, dual-specificity methyltransferase that catalyzes the formation of 5-methyluridine at position 54 (m5U54) in all tRNAs, and that of position 341 (m5U341) in tmRNA (transfer-mRNA). In Haemophilus influenzae (strain 86-028NP), this protein is tRNA/tmRNA (uracil-C(5))-methyltransferase.